The chain runs to 295 residues: Probable CBASS effector molecule IK1_05631 (295 aa).

Helical transmembrane passes span 26-46 (IFYAVRISISILIPILSISIY), 56-76 (SNTGVWFSVIGSIWLLIAYQI), 167-187 (ILLFTVSVLYLFLTIAFGFFV), and 190-210 (SMQEYIIKILLPSMSILIYGF).

It localises to the cell membrane. In terms of biological role, effector protein of a CBASS antiviral system. CBASS (cyclic oligonucleotide-based antiphage signaling system) provides immunity against bacteriophage. The CD-NTase protein synthesizes cyclic nucleotides in response to infection; these serve as specific second messenger signals. The signals activate a diverse range of effectors, leading to bacterial cell death and thus abortive phage infection. A type I-B CBASS system. Its function is as follows. Protects B.subtilis against phage infection. When IK1_05630 and IK1_05631 are introduced in B.subtilis BEST7003 there is 1000-fold protection against phage SBSphiC. Both genes are required for protection. Activation leads to bacterial cell lysis and death, which occurs before the phage has finished its replication cycle, thus protecting non-infected bacteria by aborting the phage infection and preventing its propagation. This Bacillus cereus (strain VD146) protein is Probable CBASS effector molecule IK1_05631.